The following is a 1132-amino-acid chain: MADENETVVSAPVSTAAWIYVFPKDKELLDVLSVLSLMERNSPIVISPLLMNLTVENDFSTTVKTPITNFGGTILTKITSFMPVCFFFHGTEQLVGMAEDHGDLIRLCEQTRQKFHLQSFEVPTARKVIDIKALCSAVGKDADSVICHVACGNGFKELLFAGLLIPCVEEQIQVQVGEYSCVKIPLYSATLFETEETISLSSCTEFIQERGFFLPALSETLFYYVFTSWGTTLRFSNTKELIDAGLKQFTQDGEQTVKLAPHKTYLGISGQKISAVEKDFLMLVDSVVTELSFSHVAEYLDSVYDPSQIMNFNDWPIIRNSETHAERMAQLTNLKLHLSSHLAVLIFAPNSILYCSKLAFIPNVKQAFNSVMTQELLLRSLSFCNALSSLSDDVYNDNRKIIKCDSTSGKDDKFSANHLAYACATSPQLLSFVVWNLNRMSVYNAGNAHTEIYNHLVNCSANLCEFCDGKCCQSCIGTAMVRVGTRLPAIPKNVKKEPLVMSMFSRYYAEVDILGSFGRKPVSELKEIGKDQQNTLSLDRGKFVSQIFDYCKKNSLIDPVTGEDTFNVRSKKDFVSIIHGLTQCIEECVSRCIVEMRRTQTPREQIENCLQSFNVDTTPYATAFSPFLTFSYYKVILTVLQNLALIVASGHVVDRPCTGNSISKWLVQQYQSLYGTFHSSYLKKGFLNTRTVKVASNVDMEQILDCDLYKSGKYVKTTIQAKLCRLSMQCLRDFRIKNRPFNKSSKTAHNNPYFKKNVKHKKNPLSGCISFLLFKYHDKLFPNVKISCLELWQRFLLNNVPKTLDIGNPEEVKTFIKFAFSITNTYDEIDIIDIQPECLSTFIDCYFHNKFLSALGFHDYLTSLHGLTSKLVTQNPVLFPVVLDKQPKFSSIQEYLVYVKKLVLDGVPNPVIASLSKEPNFGTIFTSRSLVTFGLTLEKFVSLANREYFQFGQLGWIGGSGVDRNLNPTSSALQDFRFMRQKTIIATKFSEVIVKKVRREAIMFDTEVVKGKVLSIVENLTNDIDPELLIIAEVMRDREDKPTMDDMLFFVDGREALAASIMLKLNHLVDMNVKDFSITNLQSVFETVSSNDAPVYDFSEILAEEDDQGNGVLKCDETETETDEPMTKKNRL.

A required for nuclear localization region spans residues 1112–1132 (VLKCDETETETDEPMTKKNRL).

It belongs to the herpesviridae major DNA-binding protein family. In terms of assembly, homooligomers. Forms double-helical filaments necessary for the formation of replication compartments within the host nucleus. Interacts with the origin-binding protein. Interacts with the helicase primase complex; this interaction stimulates primer synthesis activity of the helicase-primase complex. Interacts with the DNA polymerase. Interacts with the alkaline exonuclease; this interaction increases its nuclease processivity.

Its subcellular location is the host nucleus. In terms of biological role, single-stranded DNA-binding protein required for DNA replication. Functionally, plays several crucial roles in viral infection. Participates in the opening of the viral DNA origin to initiate replication by interacting with the origin-binding protein. May disrupt loops, hairpins and other secondary structures present on ssDNA to reduce and eliminate pausing of viral DNA polymerase at specific sites during elongation. Promotes viral DNA recombination by performing strand-transfer, characterized by the ability to transfer a DNA strand from a linear duplex to a complementary single-stranded DNA circle. Can also catalyze the renaturation of complementary single strands. Additionally, reorganizes the host cell nucleus, leading to the formation of prereplicative sites and replication compartments. This process is driven by the protein which can form double-helical filaments in the absence of DNA. The protein is Major DNA-binding protein of Human herpesvirus 6A (strain Uganda-1102) (HHV-6 variant A).